The following is a 680-amino-acid chain: MIDRYKHQQLRIGLVSPQQITAWANKILPNGEMVGEVTKPYTFHYKSNKPEKDGLFCERIFGPIKSGICACGNYRVIGDEKEDPKFCEQCGVESVDSRIRRYQMGYIKLACPVTHVWYLKRLPSYIANLSDRPLKELEGLVYCDFSFARPIAKKPTFLRLRGSFEYEIQSRKYSIPLFFTTQCFNLFRNREISTGAGAIREQLADPDLRIITDRSLVEWKELGEERSAENEWEDKKIVRRKDFLVRRMELAKHLLRTNVEPERMVLCLLPVLPPELRPIIQIDGGKPMSSDINELYRRVIYRNNTLIDPLTTSRSTPGESVMCQEKLVQEAVDTLLDNGIRGQPMRDGHNKVYKSFSDVIEGKEGRFRETLLGKRVDYSGRSVIVVGPSLSLHRCGLPREIAIELFQTFVIRGLIRQHVASNIGIAKSKIREKEPIVWEILQKVMEGHPVLLNRAPTLHRLGIQAFQPILVEGRAICLHPLVRKGFNADFDGDQMAVHVPLSLEAQAEARLLMFSHMNLLSPAIGDPISVPTQDMLIGLYVLTIGNRRGICTNRYNPCNYRNYQNEIVDDNNYKYTKEKEPYFCSSYDALGAYRQKRIDLYSPLWLRWRLDQCVIASINREVPIEVQYESLGIYHEIHEHYRIVKSVKKEIVCIYIRTTVGHISFYREIEEAIQGFCRTY.

The Zn(2+) site is built by cysteine 69, cysteine 71, cysteine 87, and cysteine 90. Residues aspartate 489, aspartate 491, and aspartate 493 each coordinate Mg(2+).

The protein belongs to the RNA polymerase beta' chain family. RpoC1 subfamily. In terms of assembly, in plastids the minimal PEP RNA polymerase catalytic core is composed of four subunits: alpha, beta, beta', and beta''. When a (nuclear-encoded) sigma factor is associated with the core the holoenzyme is formed, which can initiate transcription. It depends on Mg(2+) as a cofactor. The cofactor is Zn(2+).

Its subcellular location is the plastid. The protein resides in the chloroplast. The enzyme catalyses RNA(n) + a ribonucleoside 5'-triphosphate = RNA(n+1) + diphosphate. DNA-dependent RNA polymerase catalyzes the transcription of DNA into RNA using the four ribonucleoside triphosphates as substrates. In Amborella trichopoda, this protein is DNA-directed RNA polymerase subunit beta'.